Consider the following 140-residue polypeptide: MALERTFSIIKPDATRRNLTGAINAKFEEAGLRIVAQKRIHMTKAQAGKFYAVHAERPFYDELCEFMSSAPVVVQVLEGEGAIAKNREIMGATNPADAAPGTIRAEFAESVGENSVHGSDAPETAAEEIAYFFSGLELVG.

ATP is bound by residues Lys11, Phe59, Arg87, Thr93, Arg104, and Asn114. His117 (pros-phosphohistidine intermediate) is an active-site residue.

The protein belongs to the NDK family. Homotetramer. Requires Mg(2+) as cofactor.

The protein localises to the cytoplasm. It carries out the reaction a 2'-deoxyribonucleoside 5'-diphosphate + ATP = a 2'-deoxyribonucleoside 5'-triphosphate + ADP. The enzyme catalyses a ribonucleoside 5'-diphosphate + ATP = a ribonucleoside 5'-triphosphate + ADP. Major role in the synthesis of nucleoside triphosphates other than ATP. The ATP gamma phosphate is transferred to the NDP beta phosphate via a ping-pong mechanism, using a phosphorylated active-site intermediate. In Ruegeria sp. (strain TM1040) (Silicibacter sp.), this protein is Nucleoside diphosphate kinase.